A 160-amino-acid chain; its full sequence is Transcriptional repressor NrdR (160 aa).

Residues C3–C34 fold into a zinc finger. One can recognise an ATP-cone domain in the interval L49 to D139.

The protein belongs to the NrdR family. It depends on Zn(2+) as a cofactor.

Negatively regulates transcription of bacterial ribonucleotide reductase nrd genes and operons by binding to NrdR-boxes. The protein is Transcriptional repressor NrdR of Bartonella tribocorum (strain CIP 105476 / IBS 506).